Consider the following 138-residue polypeptide: Small ribosomal subunit protein uS11c (138 aa).

A disordered region spans residues 1–24 (MIKPIPRISSRRNGRIGSRKTGRR). Basic residues predominate over residues 9 to 24 (SSRRNGRIGSRKTGRR).

It belongs to the universal ribosomal protein uS11 family. Part of the 30S ribosomal subunit.

It localises to the plastid. The protein localises to the chloroplast. This chain is Small ribosomal subunit protein uS11c, found in Lemna minor (Common duckweed).